Reading from the N-terminus, the 509-residue chain is Maturase K (509 aa).

This sequence belongs to the intron maturase 2 family. MatK subfamily.

It localises to the plastid. The protein localises to the chloroplast. Functionally, usually encoded in the trnK tRNA gene intron. Probably assists in splicing its own and other chloroplast group II introns. The polypeptide is Maturase K (Hottonia palustris (Water-violet)).